The chain runs to 313 residues: Beta-ketoacyl-[acyl-carrier-protein] synthase III (313 aa).

Active-site residues include Cys112 and His238. Residues 239–243 (QANIR) are ACP-binding. Residue Asn268 is part of the active site.

It belongs to the thiolase-like superfamily. FabH family. As to quaternary structure, homodimer.

Its subcellular location is the cytoplasm. The enzyme catalyses malonyl-[ACP] + acetyl-CoA + H(+) = 3-oxobutanoyl-[ACP] + CO2 + CoA. It participates in lipid metabolism; fatty acid biosynthesis. Functionally, catalyzes the condensation reaction of fatty acid synthesis by the addition to an acyl acceptor of two carbons from malonyl-ACP. Catalyzes the first condensation reaction which initiates fatty acid synthesis and may therefore play a role in governing the total rate of fatty acid production. Possesses both acetoacetyl-ACP synthase and acetyl transacylase activities. Its substrate specificity determines the biosynthesis of branched-chain and/or straight-chain of fatty acids. This is Beta-ketoacyl-[acyl-carrier-protein] synthase III from Staphylococcus aureus (strain COL).